A 548-amino-acid chain; its full sequence is Chaperonin GroEL (548 aa).

ATP contacts are provided by residues 30-33 (TLGP), lysine 51, 87-91 (DGTTT), glycine 415, 479-481 (NAA), and aspartate 495.

The protein belongs to the chaperonin (HSP60) family. As to quaternary structure, forms a cylinder of 14 subunits composed of two heptameric rings stacked back-to-back. Interacts with the co-chaperonin GroES.

The protein localises to the cytoplasm. The enzyme catalyses ATP + H2O + a folded polypeptide = ADP + phosphate + an unfolded polypeptide.. In terms of biological role, together with its co-chaperonin GroES, plays an essential role in assisting protein folding. The GroEL-GroES system forms a nano-cage that allows encapsulation of the non-native substrate proteins and provides a physical environment optimized to promote and accelerate protein folding. This chain is Chaperonin GroEL, found in Pectobacterium carotovorum subsp. carotovorum (strain PC1).